Consider the following 280-residue polypeptide: Large ribosomal subunit protein uL2 (280 aa).

Disordered regions lie at residues 27–58 and 226–280; these read STPE…GGGH and MNPV…KHGR. Composition is skewed to basic residues over residues 37-58 and 268-280; these read LHGH…GGGH and IVRR…KHGR.

It belongs to the universal ribosomal protein uL2 family. As to quaternary structure, part of the 50S ribosomal subunit. Forms a bridge to the 30S subunit in the 70S ribosome.

Functionally, one of the primary rRNA binding proteins. Required for association of the 30S and 50S subunits to form the 70S ribosome, for tRNA binding and peptide bond formation. It has been suggested to have peptidyltransferase activity; this is somewhat controversial. Makes several contacts with the 16S rRNA in the 70S ribosome. The polypeptide is Large ribosomal subunit protein uL2 (Mycobacterium ulcerans (strain Agy99)).